We begin with the raw amino-acid sequence, 426 residues long: Glutamate-1-semialdehyde 2,1-aminomutase (426 aa).

Lys265 is modified (N6-(pyridoxal phosphate)lysine).

It belongs to the class-III pyridoxal-phosphate-dependent aminotransferase family. HemL subfamily. In terms of assembly, homodimer. Pyridoxal 5'-phosphate serves as cofactor.

It localises to the cytoplasm. It catalyses the reaction (S)-4-amino-5-oxopentanoate = 5-aminolevulinate. It participates in porphyrin-containing compound metabolism; protoporphyrin-IX biosynthesis; 5-aminolevulinate from L-glutamyl-tRNA(Glu): step 2/2. The chain is Glutamate-1-semialdehyde 2,1-aminomutase from Salmonella typhi.